A 199-amino-acid polypeptide reads, in one-letter code: Pectinesterase inhibitor 4 (199 aa).

A signal peptide spans 1–25 (MLRFVVLSLTLMVFINSSNFPKTAA). N-linked (GlcNAc...) asparagine glycosylation is found at N16, N33, N43, and N83. An intrachain disulfide couples C42 to C51. C109 and C158 are oxidised to a cystine.

This sequence belongs to the PMEI family. As to quaternary structure, binds reversibly to PME3 to inhibit its activity; the stability of the PME3-PMEI4 complex and the inhibition of the pectin methylesterase (PME) activity is pH-dependent, based on protonation status of amino-acids at the complex interface. As to expression, expressed in outer cell layer of roots, particularly in the root-hair zone. Expressed in roots and siliques.

It localises to the secreted. The protein resides in the extracellular space. The protein localises to the apoplast. Its function is as follows. Pectin methylesterase (PME) inhibitor that can target the root-expressed PME17 and PME3 in a pH-dependent manner, mainly in slightly acidic conditions (pH 6.3 and 5.0) but not at pH 7.5; this processus relies on changes in the protonation of amino acids involved in intermolecular and intramolecular interactions. Regulate de-methylesterification of pectins in roots and affects root growth. This is Pectinesterase inhibitor 4 from Arabidopsis thaliana (Mouse-ear cress).